The primary structure comprises 221 residues: Penicillin-binding protein activator LpoB (221 aa).

An N-terminal signal peptide occupies residues M1–G20. C21 carries N-palmitoyl cysteine lipidation. Residue C21 is the site of S-diacylglycerol cysteine attachment. The disordered stretch occupies residues P29–A82. Pro residues predominate over residues Q44–P57.

It belongs to the LpoB family. As to quaternary structure, interacts with PBP1b.

The protein resides in the cell outer membrane. Its function is as follows. Regulator of peptidoglycan synthesis that is essential for the function of penicillin-binding protein 1B (PBP1b). This Cronobacter turicensis (strain DSM 18703 / CCUG 55852 / LMG 23827 / z3032) protein is Penicillin-binding protein activator LpoB.